Here is a 227-residue protein sequence, read N- to C-terminus: tRNA (guanine-N(7)-)-methyltransferase (227 aa).

S-adenosyl-L-methionine contacts are provided by E60, E85, D112, and D135. Residue D135 is part of the active site. Substrate contacts are provided by residues K139, D171, and 206–209 (TKFE).

The protein belongs to the class I-like SAM-binding methyltransferase superfamily. TrmB family.

The enzyme catalyses guanosine(46) in tRNA + S-adenosyl-L-methionine = N(7)-methylguanosine(46) in tRNA + S-adenosyl-L-homocysteine. It functions in the pathway tRNA modification; N(7)-methylguanine-tRNA biosynthesis. Catalyzes the formation of N(7)-methylguanine at position 46 (m7G46) in tRNA. This is tRNA (guanine-N(7)-)-methyltransferase from Thiobacillus denitrificans (strain ATCC 25259 / T1).